The following is a 120-amino-acid chain: NAD(P)H-quinone oxidoreductase subunit 3, chloroplastic (120 aa).

3 consecutive transmembrane segments (helical) span residues 9–29 (IFWA…LISG), 64–84 (MFAL…PWAM), and 88–108 (VLGV…IVGS).

The protein belongs to the complex I subunit 3 family. In terms of assembly, NDH is composed of at least 16 different subunits, 5 of which are encoded in the nucleus.

It is found in the plastid. The protein resides in the chloroplast thylakoid membrane. It catalyses the reaction a plastoquinone + NADH + (n+1) H(+)(in) = a plastoquinol + NAD(+) + n H(+)(out). It carries out the reaction a plastoquinone + NADPH + (n+1) H(+)(in) = a plastoquinol + NADP(+) + n H(+)(out). In terms of biological role, NDH shuttles electrons from NAD(P)H:plastoquinone, via FMN and iron-sulfur (Fe-S) centers, to quinones in the photosynthetic chain and possibly in a chloroplast respiratory chain. The immediate electron acceptor for the enzyme in this species is believed to be plastoquinone. Couples the redox reaction to proton translocation, and thus conserves the redox energy in a proton gradient. The polypeptide is NAD(P)H-quinone oxidoreductase subunit 3, chloroplastic (Amborella trichopoda).